The sequence spans 177 residues: Large ribosomal subunit protein uL6 (177 aa).

It belongs to the universal ribosomal protein uL6 family. As to quaternary structure, part of the 50S ribosomal subunit.

Functionally, this protein binds to the 23S rRNA, and is important in its secondary structure. It is located near the subunit interface in the base of the L7/L12 stalk, and near the tRNA binding site of the peptidyltransferase center. The sequence is that of Large ribosomal subunit protein uL6 from Azorhizobium caulinodans (strain ATCC 43989 / DSM 5975 / JCM 20966 / LMG 6465 / NBRC 14845 / NCIMB 13405 / ORS 571).